Consider the following 1187-residue polypeptide: MRNHCLELSSNCSSIFASSKSNPRFSPSKLSYSTFFSRSAIYYRSKPKQASSSSSFSTFPPCLNRKSSLTHVLKPVSELADTTTKPFSPEIVGKRTDLKKIMILGAGPIVIGQACEFDYSGTQACKALREEGYEVILINSNPATIMTDPETANRTYIAPMTPELVEQVIEKERPDALLPTMGGQTALNLAVALAESGALEKYGVELIGAKLGAIKKAEDRELFKDAMKNIGLKTPPSGIGTTLDECFDIAEKIGEFPLIIRPAFTLGGTGGGIAYNKEEFESICKSGLAASATSQVLVEKSLLGWKEYELEVMRDLADNVVIICSIENIDPMGVHTGDSITVAPAQTLTDREYQRLRDYSIAIIREIGVECGGSNVQFAVNPVDGEVMIIEMNPRVSRSSALASKATGFPIAKMAAKLSVGYTLDQIPNDITRKTPASFEPSIDYVVTKIPRFAFEKFPGSQPLLTTQMKSVGESMALGRTFQESFQKALRSLECGFSGWGCAKIKELDWDWDQLKYSLRVPNPDRIHAIYAAMKKGMKIDEIYELSMVDKWFLTQLKELVDVEQYLMSGTLSEITKEDLYEVKKRGFSDKQIAFATKTTEEEVRTKRISLGVVPSYKRVDTCAAEFEAHTPYMYSSYDVECESAPNNKKKVLILGGGPNRIGQGIEFDYCCCHTSFALQDAGYETIMLNSNPETVSTDYDTSDRLYFEPLTIEDVLNVIDLEKPDGIIVQFGGQTPLKLALPIKHYLDKHMPMSLSGAGPVRIWGTSPDSIDAAEDRERFNAILDELKIEQPKGGIAKSEADALAIAKEVGYPVVVRPSYVLGGRAMEIVYDDSRLITYLENAVQVDPERPVLVDKYLSDAIEIDVDTLTDSYGNVVIGGIMEHIEQAGVHSGDSACMLPTQTIPASCLQTIRTWTTKLAKKLNVCGLMNCQYAITTSGDVFLLEANPRASRTVPFVSKAIGHPLAKYAALVMSGKSLKDLNFEKEVIPKHVSVKEAVFPFEKFQGCDVILGPEMRSTGEVMSISSEFSSAFAMAQIAAGQKLPLSGTVFLSLNDMTKPHLEKIAVSFLELGFKIVATSGTAHFLELKGIPVERVLKLHEGRPHAADMVANGQIHLMLITSSGDALDQKDGRQLRQMALAYKVPVITTVAGALATAEGIKSLKSSAIKMTALQDFFEVKNVSSLLV.

Residues 1-62 (MRNHCLELSS…SSSFSTFPPC (62 aa)) constitute a chloroplast transit peptide. Positions 93-494 (GKRTDLKKIM…SFQKALRSLE (402 aa)) are carboxyphosphate synthetic domain. ATP-binding residues include R220, R261, G267, G268, K300, L302, E307, G333, V334, H335, Q377, and E391. The ATP-grasp 1 domain maps to 224 to 420 (KDAMKNIGLK…IAKMAAKLSV (197 aa)). Positions 377, 391, and 393 each coordinate Mg(2+). The segment at 495–644 (CGFSGWGCAK…YSSYDVECES (150 aa)) is oligomerization domain. Residues 645-1040 (APNNKKKVLI…SAFAMAQIAA (396 aa)) are carbamoyl phosphate synthetic domain. An ATP-grasp 2 domain is found at 782-975 (NAILDELKIE…LAKYAALVMS (194 aa)). ATP is bound by residues R818, K857, L859, E864, G890, V891, H892, S893, Q933, and E946. 3 residues coordinate Mg(2+): Q933, E946, and N948. The segment at 1041 to 1187 (GQKLPLSGTV…EVKNVSSLLV (147 aa)) is allosteric domain. One can recognise an MGS-like domain in the interval 1042-1183 (QKLPLSGTVF…QDFFEVKNVS (142 aa)).

Belongs to the CarB family. As to quaternary structure, heterodimer composed of 2 chains; the small (or glutamine) chain promotes the hydrolysis of glutamine to ammonia, which is used by the large (or ammonia) chain to synthesize carbamoyl phosphate. Mg(2+) serves as cofactor. Mn(2+) is required as a cofactor. Expressed in roots and leaves.

The protein localises to the plastid. The protein resides in the chloroplast. It carries out the reaction hydrogencarbonate + L-glutamine + 2 ATP + H2O = carbamoyl phosphate + L-glutamate + 2 ADP + phosphate + 2 H(+). It catalyses the reaction hydrogencarbonate + NH4(+) + 2 ATP = carbamoyl phosphate + 2 ADP + phosphate + 2 H(+). It functions in the pathway amino-acid biosynthesis; L-arginine biosynthesis; carbamoyl phosphate from bicarbonate: step 1/1. Functionally, large subunit of the arginine-specific carbamoyl phosphate synthase (CPSase). CPSase catalyzes the formation of carbamoyl phosphate from the ammonia moiety of glutamine, hydrogencarbonate, and phosphate donated by ATP, constituting the first step of 2 biosynthetic pathways, one leading to arginine and/or urea and the other to pyrimidine nucleotides. The large subunit (synthetase) binds the substrates ammonia (free or transferred from glutamine from the small subunit), hydrogencarbonate and ATP and carries out an ATP-coupled ligase reaction, activating hydrogencarbonate by forming carboxy phosphate which reacts with ammonia to form carbamoyl phosphate. Required for mesophyll development. The sequence is that of Carbamoyl phosphate synthase arginine-specific large chain, chloroplastic (CARB) from Arabidopsis thaliana (Mouse-ear cress).